A 283-amino-acid polypeptide reads, in one-letter code: Polyamine aminopropyltransferase (283 aa).

One can recognise a PABS domain in the interval 5 to 238; that stretch reads TTWIDEYQKG…GIWSWTFASK (234 aa). An S-methyl-5'-thioadenosine-binding site is contributed by Gln32. His63 and Asp87 together coordinate spermidine. S-methyl-5'-thioadenosine-binding positions include Glu107 and 139 to 140; that span reads DG. Asp158 acts as the Proton acceptor in catalysis. 158–161 is a spermidine binding site; the sequence is DCSD.

It belongs to the spermidine/spermine synthase family. Homodimer or homotetramer.

It localises to the cytoplasm. The enzyme catalyses S-adenosyl 3-(methylsulfanyl)propylamine + putrescine = S-methyl-5'-thioadenosine + spermidine + H(+). It functions in the pathway amine and polyamine biosynthesis; spermidine biosynthesis; spermidine from putrescine: step 1/1. Functionally, catalyzes the irreversible transfer of a propylamine group from the amino donor S-adenosylmethioninamine (decarboxy-AdoMet) to putrescine (1,4-diaminobutane) to yield spermidine. This is Polyamine aminopropyltransferase from Prochlorococcus marinus (strain MIT 9515).